A 681-amino-acid polypeptide reads, in one-letter code: Conserved oligomeric Golgi complex subunit 2 (681 aa).

It belongs to the COG2 family. In terms of assembly, component of the conserved oligomeric Golgi complex which is composed of eight different subunits and is required for normal Golgi morphology and localization.

The protein localises to the golgi apparatus membrane. Its function is as follows. Required for normal Golgi morphology and function. This chain is Conserved oligomeric Golgi complex subunit 2 (cogc-2), found in Caenorhabditis elegans.